The primary structure comprises 1297 residues: Protein Atossa (1297 aa).

Disordered stretches follow at residues 1 to 22 (MIPT…GASA) and 117 to 149 (TNPY…THQR). Low complexity predominate over residues 133 to 144 (GSGSTGSPSSSS). The tract at residues 174–182 (VSLAINDLN) is transactivation domain 1 (TAD1). Disordered regions lie at residues 206–227 (SSAG…NSSD), 287–311 (TPTT…KHGP), 518–655 (GLPH…ETQS), 704–741 (SNGT…SSAD), and 1017–1048 (AAHK…DLES). 2 stretches are compositionally biased toward low complexity: residues 213–226 (NNSS…SNSS) and 287–305 (TPTT…SSAS). Residues 564-578 (SALTPTTTAGGSNCD) show a composition bias toward polar residues. The span at 605–620 (QKYRKRMQRRDKKRER) shows a compositional bias: basic residues. Composition is skewed to low complexity over residues 643 to 655 (SQTQ…ETQS) and 706 to 716 (GTANGSTNGAT). Residues 717–731 (DDGDDSDTTASEMEE) are compositionally biased toward acidic residues. The segment at 1074 to 1132 (LLGNLEESLLQRRLMPKIEVMGFTLQLGASGGFCPTQVNIPAVSYFYELHGETLSTPYL) is required for macropage invasion. The transactivation domain 2 (TAD2) stretch occupies residues 1150 to 1158 (VQATLLNPI). Residues 1192–1213 (SQDQDEGHKVPRSPTVTSTTSK) are disordered. The segment covering 1203–1212 (RSPTVTSTTS) has biased composition (low complexity).

The protein belongs to the ATOS family. In terms of tissue distribution, expressed in macrophages.

Its subcellular location is the nucleus. Its function is as follows. Transcription regulator that synchronizes transcriptional and translational programs to promote macrophage invasion of tissues. Required in macrophages for their early invasion into the extended germband. Induces transcriptional expression of metabolic enzymes as well as of the translational regulator pths/DDX47. With pths/DDX47, adjusts transcription and translation of a subset of OXPHOS genes to increase mitochondrial bioenergetics and allow macrophage tissue invasion. The protein is Protein Atossa of Drosophila melanogaster (Fruit fly).